The chain runs to 341 residues: DNA-directed RNA polymerase subunit alpha (341 aa).

Residues 1–233 form an alpha N-terminal domain (alpha-NTD) region; the sequence is MIQDEVPVSA…DLFLPFLHTE (233 aa). The tract at residues 262–341 is alpha C-terminal domain (alpha-CTD); it reads DRMAKEVAFK…NLPRNKFSID (80 aa).

This sequence belongs to the RNA polymerase alpha chain family. In plastids the minimal PEP RNA polymerase catalytic core is composed of four subunits: alpha, beta, beta', and beta''. When a (nuclear-encoded) sigma factor is associated with the core the holoenzyme is formed, which can initiate transcription.

The protein localises to the plastid. It is found in the chloroplast. The enzyme catalyses RNA(n) + a ribonucleoside 5'-triphosphate = RNA(n+1) + diphosphate. In terms of biological role, DNA-dependent RNA polymerase catalyzes the transcription of DNA into RNA using the four ribonucleoside triphosphates as substrates. The chain is DNA-directed RNA polymerase subunit alpha from Angiopteris evecta (Mule's foot fern).